Reading from the N-terminus, the 445-residue chain is Maltoporin 2 (445 aa).

Positions 1 to 25 are cleaved as a signal peptide; it reads MKMKAKWLPIAAAVTAALASQAAFA.

This sequence belongs to the porin LamB (TC 1.B.3) family. Homotrimer formed of three 18-stranded antiparallel beta-barrels, containing three independent channels.

Its subcellular location is the cell outer membrane. It catalyses the reaction beta-maltose(in) = beta-maltose(out). In terms of biological role, involved in the transport of maltose and maltodextrins. The sequence is that of Maltoporin 2 from Aeromonas salmonicida (strain A449).